The following is a 378-amino-acid chain: UPF0284 protein MK0224 (378 aa).

The protein belongs to the UPF0284 family.

The sequence is that of UPF0284 protein MK0224 from Methanopyrus kandleri (strain AV19 / DSM 6324 / JCM 9639 / NBRC 100938).